Reading from the N-terminus, the 130-residue chain is Small ribosomal subunit protein uS9 (130 aa).

The disordered stretch occupies residues 111–130 (KERRKYGLKKARKAPQFSKR).

It belongs to the universal ribosomal protein uS9 family.

This chain is Small ribosomal subunit protein uS9, found in Thermoanaerobacter sp. (strain X514).